A 502-amino-acid chain; its full sequence is uncharacterized protein (502 aa).

The next 2 helical transmembrane spans lie at 10 to 30 (NLTL…IXIF) and 473 to 493 (FSLI…FGLV).

Its subcellular location is the cell membrane. This is an uncharacterized protein from Borreliella burgdorferi (strain ATCC 35210 / DSM 4680 / CIP 102532 / B31) (Borrelia burgdorferi).